Reading from the N-terminus, the 119-residue chain is Circadian clock oscillator protein KaiB (119 aa).

This sequence belongs to the KaiB family. As to quaternary structure, may undergo a major conformational rearrangment; in the free state forms homooligomers. When bound to KaiC switches to a monomeric thioredoxin-fold (KaiB(fs)). The active oscillator complex is probably KaiC(6):KaiB(6).

Its function is as follows. Component of the KaiBC clock protein complex, which constitutes the main circadian regulator in cyanobacteria; it may modify the ATPase activity of KaiC. May be a metamorphic protein which reversibly switches between an inactive tetrameric fold and a rare, thioredoxin-like monomeric fold (KaiB(fs)). KaiB(fs) binds phospho-KaiC, and perhaps clock output effectors. This is Circadian clock oscillator protein KaiB from Prochlorococcus marinus (strain MIT 9303).